The chain runs to 284 residues: 2-dehydro-3-deoxyphosphooctonate aldolase (284 aa).

This sequence belongs to the KdsA family.

It is found in the cytoplasm. The catalysed reaction is D-arabinose 5-phosphate + phosphoenolpyruvate + H2O = 3-deoxy-alpha-D-manno-2-octulosonate-8-phosphate + phosphate. It functions in the pathway carbohydrate biosynthesis; 3-deoxy-D-manno-octulosonate biosynthesis; 3-deoxy-D-manno-octulosonate from D-ribulose 5-phosphate: step 2/3. Its pathway is bacterial outer membrane biogenesis; lipopolysaccharide biosynthesis. The protein is 2-dehydro-3-deoxyphosphooctonate aldolase of Cronobacter sakazakii (strain ATCC BAA-894) (Enterobacter sakazakii).